Reading from the N-terminus, the 1404-residue chain is DNA-directed RNA polymerase subunit beta' (1404 aa).

Residues cysteine 60, cysteine 62, cysteine 75, and cysteine 78 each contribute to the Zn(2+) site. Residues aspartate 449, aspartate 451, and aspartate 453 each contribute to the Mg(2+) site. 4 residues coordinate Zn(2+): cysteine 778, cysteine 852, cysteine 859, and cysteine 862. The interval 1380–1404 (LDRPLEEEEEEEIPQAIAEESDAEE) is disordered. The segment covering 1384-1404 (LEEEEEEEIPQAIAEESDAEE) has biased composition (acidic residues).

This sequence belongs to the RNA polymerase beta' chain family. In terms of assembly, the RNAP catalytic core consists of 2 alpha, 1 beta, 1 beta' and 1 omega subunit. When a sigma factor is associated with the core the holoenzyme is formed, which can initiate transcription. Requires Mg(2+) as cofactor. Zn(2+) is required as a cofactor.

It carries out the reaction RNA(n) + a ribonucleoside 5'-triphosphate = RNA(n+1) + diphosphate. Functionally, DNA-dependent RNA polymerase catalyzes the transcription of DNA into RNA using the four ribonucleoside triphosphates as substrates. In Leptospira interrogans serogroup Icterohaemorrhagiae serovar Lai (strain 56601), this protein is DNA-directed RNA polymerase subunit beta'.